We begin with the raw amino-acid sequence, 162 residues long: Ribosome maturation factor RimP (162 aa).

The protein belongs to the RimP family.

The protein resides in the cytoplasm. Required for maturation of 30S ribosomal subunits. The protein is Ribosome maturation factor RimP of Leptospira biflexa serovar Patoc (strain Patoc 1 / Ames).